A 901-amino-acid chain; its full sequence is Protein translocase subunit SecA (901 aa).

ATP-binding positions include glutamine 87, 105-109, and aspartate 512; that span reads GEGKT. Residues 853 to 901 form a disordered region; sequence QMQQLSHQTDENEAAEAIAAQTGDRKVGRNDPCPCGSGKKYKSCHGRLS. Zn(2+) contacts are provided by cysteine 885, cysteine 887, cysteine 896, and histidine 897. Basic residues predominate over residues 891–901; that stretch reads KKYKSCHGRLS.

Belongs to the SecA family. As to quaternary structure, monomer and homodimer. Part of the essential Sec protein translocation apparatus which comprises SecA, SecYEG and auxiliary proteins SecDF-YajC and YidC. It depends on Zn(2+) as a cofactor.

It localises to the cell inner membrane. The protein resides in the cytoplasm. The catalysed reaction is ATP + H2O + cellular proteinSide 1 = ADP + phosphate + cellular proteinSide 2.. Functionally, part of the Sec protein translocase complex. Interacts with the SecYEG preprotein conducting channel. Has a central role in coupling the hydrolysis of ATP to the transfer of proteins into and across the cell membrane, serving both as a receptor for the preprotein-SecB complex and as an ATP-driven molecular motor driving the stepwise translocation of polypeptide chains across the membrane. This is Protein translocase subunit SecA from Enterobacter sp. (strain 638).